The chain runs to 327 residues: Xylosidase/arabinosidase 43A (327 aa).

Residue D12 is the Proton acceptor of the active site. The Proton donor role is filled by E228.

This sequence belongs to the glycosyl hydrolase 43 family.

The protein localises to the secreted. The catalysed reaction is Hydrolysis of (1-&gt;4)-beta-D-xylans, to remove successive D-xylose residues from the non-reducing termini.. The enzyme catalyses Hydrolysis of terminal non-reducing alpha-L-arabinofuranoside residues in alpha-L-arabinosides.. With respect to regulation, activity is inhibited by Ag(+), Li(+), Pb(2+), Cu(2+), Cr(3+), Co(3+), Fe(3+), Ni(2+), Mg(2+), Zn(2+), EDTA and SDS; but not by Mn(2+), Ca(2+) and beta-mercaptoethanol. In terms of biological role, bifunctional beta-xylosidase/alpha-L-arabinosidases with a low level of xylanase activity. Is most active on 4-nitrophenyl beta-D-xylopyranoside (pNPX) (defined as 100%), moderate on p-nitrophenyl-alpha-L-arabinofuranoside (pNPA) (23.7%), and weak on beechwood xylan (15.9%) and birchwood xylan (15.2%). Is able to attack xylooligosacchardies with degrees of polymerisation of 2-5, releasing the amounts of reducing sugars in the order of xylopentose &gt; xylotetraose &gt; xylotriose &gt; xylobiose, i.e. the rate of xylose released from xylooligosacchardies increased with the chain length. No activity is detected in the presence of carboxymethyl cellulose-sodium (CMC-Na), sugar beet arabinan, AZCL-arabinan (debranched), 4-nitrophenyl a-D - galactopyranoside, 2-nitrophenyl beta-D-galactopyranoside, and 4-nitrophenyl alpha-D-glucopyranoside. The sequence is that of Xylosidase/arabinosidase 43A from Humicola insolens (Soft-rot fungus).